Here is a 397-residue protein sequence, read N- to C-terminus: Acetate kinase (397 aa).

Position 7 (Asn-7) interacts with Mg(2+). Lys-14 contacts ATP. Arg-91 is a binding site for substrate. Asp-148 functions as the Proton donor/acceptor in the catalytic mechanism. Residues 208–212 (HLGNG), 283–285 (DFR), and 331–335 (GLGEN) each bind ATP. Glu-383 contributes to the Mg(2+) binding site.

It belongs to the acetokinase family. Homodimer. It depends on Mg(2+) as a cofactor. Mn(2+) is required as a cofactor.

Its subcellular location is the cytoplasm. The catalysed reaction is acetate + ATP = acetyl phosphate + ADP. Its pathway is metabolic intermediate biosynthesis; acetyl-CoA biosynthesis; acetyl-CoA from acetate: step 1/2. Its function is as follows. Catalyzes the formation of acetyl phosphate from acetate and ATP. Can also catalyze the reverse reaction. In Heliobacterium modesticaldum (strain ATCC 51547 / Ice1), this protein is Acetate kinase.